A 358-amino-acid polypeptide reads, in one-letter code: Probable cinnamyl alcohol dehydrogenase (358 aa).

Cys-48 is a Zn(2+) binding site. NADP(+) is bound at residue Ser-50. His-70, Glu-71, Cys-101, Cys-104, Cys-107, Cys-115, and Cys-164 together coordinate Zn(2+). Residues Thr-168, 189-194 (GLGGVG), 212-217 (SSSDKK), Thr-252, Gly-276, and 299-301 (SFV) contribute to the NADP(+) site.

Belongs to the zinc-containing alcohol dehydrogenase family. Homodimer. The cofactor is Zn(2+). As to expression, most actively expressed in stem, hypocotyl and root tissue.

It carries out the reaction (E)-cinnamyl alcohol + NADP(+) = (E)-cinnamaldehyde + NADPH + H(+). The enzyme catalyses (E)-coniferol + NADP(+) = (E)-coniferaldehyde + NADPH + H(+). It catalyses the reaction (E)-sinapyl alcohol + NADP(+) = (E)-sinapaldehyde + NADPH + H(+). The catalysed reaction is (E)-4-coumaroyl alcohol + NADP(+) = (E)-4-coumaraldehyde + NADPH + H(+). It carries out the reaction (E)-caffeyl alcohol + NADP(+) = (E)-caffeyl aldehyde + NADPH + H(+). The protein operates within aromatic compound metabolism; phenylpropanoid biosynthesis. Functionally, this protein catalyzes the final step in a branch of phenylpropanoid synthesis specific for production of lignin monomers. It acts on coniferyl-, sinapyl-, 4-coumaryl- and cinnamyl-alcohol. This is Probable cinnamyl alcohol dehydrogenase (CAD2) from Medicago sativa (Alfalfa).